Reading from the N-terminus, the 1132-residue chain is Telomerase reverse transcriptase (1132 aa).

The interval 1–230 (MPRAPRCRAV…ARRRGGSASR (230 aa)) is RNA-interacting domain 1. Positions 58-197 (VPWDARPPPA…PHASGPRRRL (140 aa)) are GQ motif. The tract at residues 137–141 (WGLLL) is required for regulating specificity for telomeric DNA and for processivity for primer elongation. A disordered region spans residues 210–320 (AGVPLGLPAP…SRPPRPWDTP (111 aa)). Positions 213-234 (PLGLPAPGARRRGGSASRSLPL) are enriched in low complexity. Residues 222 to 240 (RRRGGSASRSLPLPKRPRR) carry the Bipartite nuclear localization signal motif. The residue at position 227 (Ser227) is a Phosphoserine; by PKB/AKT1. The interval 231–324 (SLPLPKRPRR…RPWDTPCPPV (94 aa)) is linker. Positions 293–304 (RHSHPSVGRQHH) are enriched in basic residues. The segment at 301-538 (RQHHAGPPST…VPAAEHRLRE (238 aa)) is required for oligomerization. Over residues 310-320 (TSRPPRPWDTP) the composition is skewed to pro residues. The segment at 325–550 (YAETKHFLYS…LAKFLHWLMS (226 aa)) is RNA-interacting domain 2. The TFLY; involved in RNA binding motif lies at 328-333 (TKHFLY). Residues 376–521 (PRRLPRLPQR…MSVRDCAWLR (146 aa)) form a QFP motif region. The segment at 397–417 (LGNHAQCPYGVLLKTHCPLRA) is CP motif. Phosphoserine; by DYRK2 is present on Ser457. In terms of domain architecture, Reverse transcriptase spans 605 to 935 (EVRQHREARP…GLFPWCGLLL (331 aa)). Tyr707 bears the Phosphotyrosine; by SRC-type Tyr-kinases mark. Mg(2+)-binding residues include Asp712, Asp868, and Asp869. A required for oligomerization region spans residues 914 to 928 (LGGTAFVQMPAHGLF). A primer grip sequence region spans residues 930 to 934 (WCGLL). The tract at residues 936–1132 (DTRTLEVQSD…LPSDFKTILD (197 aa)) is CTE.

Belongs to the reverse transcriptase family. Telomerase subfamily. Catalytic component of the telomerase holoenzyme complex composed of one molecule of TERT, one molecule of WRAP53/TCAB1, two molecules of H/ACA ribonucleoprotein complex subunits DKC1, NOP10, NHP2 and GAR1, and a telomerase RNA template component (TERC). The telomerase holoenzyme complex is associated with TEP1, SMG6/EST1A and POT1. The molecular chaperone HSP90/P23 complex is required for correct assembly and stabilization of the active telomerase. Interacts directly with HSP90A and PTGES3. Interacts with HSPA1A; the interaction occurs in the absence of TERC and dissociates once the complex has formed. Interacts with RAN; the interaction promotes nuclear export of TERT. Interacts with XPO1. Interacts with PTPN11; the interaction retains TERT in the nucleus. Interacts with NCL (via RRM1 and C-terminal RRM4/Arg/Gly-rich domains); the interaction is important for nucleolar localization of TERT. Interacts with SMARCA4 (via the bromodomain); the interaction regulates Wnt-mediated signaling. Interacts with MCRS1 (isoform MCRS2); the interaction inhibits in vitro telomerase activity. Interacts with PIF1; the interaction has no effect on the elongation activity of TERT. Interacts with PML; the interaction recruits TERT to PML bodies and inhibits telomerase activity. Interacts with GNL3L. Interacts with isoform 1 and isoform 2 of NVL. Interacts with DHX36. Interacts with ATF7. In terms of processing, phosphorylation at Tyr-707 under oxidative stress leads to translocation of TERT to the cytoplasm and reduces its antiapoptotic activity. Dephosphorylated by SHP2/PTPN11 leading to nuclear retention. Phosphorylation at Ser-227 by the AKT pathway promotes nuclear location. Phosphorylation at the G2/M phase at Ser-457 by DYRK2 promotes ubiquitination by the EDVP complex and degradation. Ubiquitinated by the EDVP complex, a E3 ligase complex following phosphorylation at Ser-457 by DYRK2. Ubiquitinated leads to proteasomal degradation. Post-translationally, (Microbial infection) In case of infection by HIV-1, the EDVP complex is hijacked by HIV-1 via interaction between HIV-1 Vpr and DCAF1/VPRBP, leading to ubiquitination and degradation. Expressed at a high level in thymocyte subpopulations, at an intermediate level in tonsil T-lymphocytes, and at a low to undetectable level in peripheral blood T-lymphocytes.

The protein localises to the nucleus. It localises to the nucleolus. It is found in the nucleoplasm. Its subcellular location is the chromosome. The protein resides in the telomere. The protein localises to the cytoplasm. It localises to the PML body. It catalyses the reaction DNA(n) + a 2'-deoxyribonucleoside 5'-triphosphate = DNA(n+1) + diphosphate. Functionally, telomerase is a ribonucleoprotein enzyme essential for the replication of chromosome termini in most eukaryotes. Active in progenitor and cancer cells. Inactive, or very low activity, in normal somatic cells. Catalytic component of the teleromerase holoenzyme complex whose main activity is the elongation of telomeres by acting as a reverse transcriptase that adds simple sequence repeats to chromosome ends by copying a template sequence within the RNA component of the enzyme. Catalyzes the RNA-dependent extension of 3'-chromosomal termini with the 6-nucleotide telomeric repeat unit, 5'-TTAGGG-3'. The catalytic cycle involves primer binding, primer extension and release of product once the template boundary has been reached or nascent product translocation followed by further extension. More active on substrates containing 2 or 3 telomeric repeats. Telomerase activity is regulated by a number of factors including telomerase complex-associated proteins, chaperones and polypeptide modifiers. Modulates Wnt signaling. Plays important roles in aging and antiapoptosis. This Homo sapiens (Human) protein is Telomerase reverse transcriptase (TERT).